A 129-amino-acid polypeptide reads, in one-letter code: Small ribosomal subunit protein uS12 (129 aa).

The disordered stretch occupies residues Met1 to Glu25. The segment covering Phe10 to Lys20 has biased composition (basic residues). Asp89 carries the post-translational modification 3-methylthioaspartic acid. Positions Arg110–Lys129 are disordered.

This sequence belongs to the universal ribosomal protein uS12 family. As to quaternary structure, part of the 30S ribosomal subunit. Contacts proteins S8 and S17. May interact with IF1 in the 30S initiation complex.

In terms of biological role, with S4 and S5 plays an important role in translational accuracy. Functionally, interacts with and stabilizes bases of the 16S rRNA that are involved in tRNA selection in the A site and with the mRNA backbone. Located at the interface of the 30S and 50S subunits, it traverses the body of the 30S subunit contacting proteins on the other side and probably holding the rRNA structure together. The combined cluster of proteins S8, S12 and S17 appears to hold together the shoulder and platform of the 30S subunit. In Rickettsia canadensis (strain McKiel), this protein is Small ribosomal subunit protein uS12.